Reading from the N-terminus, the 90-residue chain is DNA-binding protein HU-beta (90 aa).

It belongs to the bacterial histone-like protein family. As to quaternary structure, heterodimer of an alpha and a beta chain.

Histone-like DNA-binding protein which is capable of wrapping DNA to stabilize it, and thus to prevent its denaturation under extreme environmental conditions. The protein is DNA-binding protein HU-beta (hupB) of Salmonella typhi.